A 155-amino-acid chain; its full sequence is Ribosome maturation factor RimP (155 aa).

The protein belongs to the RimP family.

Its subcellular location is the cytoplasm. In terms of biological role, required for maturation of 30S ribosomal subunits. In Prochlorococcus marinus (strain SARG / CCMP1375 / SS120), this protein is Ribosome maturation factor RimP.